Consider the following 309-residue polypeptide: NAD-dependent protein deacylase sirtuin-5, mitochondrial (309 aa).

The transit peptide at 1-35 (MILLPFHTRRLVSHVYCGLKPASKKKGIALEMARP) directs the protein to the mitochondrion. The region spanning 36–306 (SSNLADFREA…PPAIARHETE (271 aa)) is the Deacetylase sirtuin-type domain. 57–76 (GAGVSAESGVPTFRGAGGYW) is an NAD(+) binding site. Positions 101 and 104 each coordinate substrate. 139–142 (QNID) contributes to the NAD(+) binding site. The active-site Proton acceptor is the H157. Zn(2+) contacts are provided by C165, C168, C206, and C211. Residues 248–250 (GTS), 274–276 (NME), and C292 each bind NAD(+).

This sequence belongs to the sirtuin family. Class III subfamily. The cofactor is Zn(2+).

It is found in the mitochondrion. The protein localises to the cytoplasm. Its subcellular location is the cytosol. The protein resides in the nucleus. It carries out the reaction N(6)-malonyl-L-lysyl-[protein] + NAD(+) + H2O = 2''-O-malonyl-ADP-D-ribose + nicotinamide + L-lysyl-[protein]. It catalyses the reaction N(6)-succinyl-L-lysyl-[protein] + NAD(+) + H2O = 2''-O-succinyl-ADP-D-ribose + nicotinamide + L-lysyl-[protein]. The enzyme catalyses N(6)-glutaryl-L-lysyl-[protein] + NAD(+) + H2O = 2''-O-glutaryl-ADP-D-ribose + nicotinamide + L-lysyl-[protein]. NAD-dependent lysine demalonylase, desuccinylase and deglutarylase that specifically removes malonyl, succinyl and glutaryl groups on target proteins. Has weak NAD-dependent protein deacetylase activity; however this activity may not be physiologically relevant in vivo. The protein is NAD-dependent protein deacylase sirtuin-5, mitochondrial (sirt5) of Xenopus tropicalis (Western clawed frog).